Consider the following 239-residue polypeptide: LexA repressor (239 aa).

Positions 26 to 46 (FDEMKEALDLASKSGIHRLIT) form a DNA-binding region, H-T-H motif. The tract at residues 90-110 (GSLGKTPPPPARPAPVATNDD) is disordered. Residues serine 160 and lysine 198 each act as for autocatalytic cleavage activity in the active site.

It belongs to the peptidase S24 family. As to quaternary structure, homodimer.

The enzyme catalyses Hydrolysis of Ala-|-Gly bond in repressor LexA.. Functionally, represses a number of genes involved in the response to DNA damage (SOS response), including recA and lexA. In the presence of single-stranded DNA, RecA interacts with LexA causing an autocatalytic cleavage which disrupts the DNA-binding part of LexA, leading to derepression of the SOS regulon and eventually DNA repair. In Brucella anthropi (strain ATCC 49188 / DSM 6882 / CCUG 24695 / JCM 21032 / LMG 3331 / NBRC 15819 / NCTC 12168 / Alc 37) (Ochrobactrum anthropi), this protein is LexA repressor.